Reading from the N-terminus, the 285-residue chain is Protease HtpX homolog (285 aa).

The next 2 membrane-spanning stretches (helical) occupy residues 7 to 27 and 30 to 50; these read TAML…MIGG and GMTI…WFSD. His131 is a Zn(2+) binding site. Glu132 is a catalytic residue. His135 provides a ligand contact to Zn(2+). 2 helical membrane-spanning segments follow: residues 146 to 166 and 177 to 197; these read ITAT…FFGG and IAGI…QMAI. Glu202 contacts Zn(2+).

The protein belongs to the peptidase M48B family. Zn(2+) serves as cofactor.

It is found in the cell inner membrane. This is Protease HtpX homolog from Burkholderia lata (strain ATCC 17760 / DSM 23089 / LMG 22485 / NCIMB 9086 / R18194 / 383).